Here is a 184-residue protein sequence, read N- to C-terminus: Der GTPase-activating protein YihI (184 aa).

Residues 1 to 107 (MNRPVKGAAD…VVAAKPTMSP (107 aa)) are disordered. Positions 21-32 (TREELEREARER) are enriched in basic and acidic residues. Residues 80-95 (SAVAKPKPKSKPSAPV) are compositionally biased toward low complexity.

This sequence belongs to the YihI family. In terms of assembly, interacts with Der.

In terms of biological role, a GTPase-activating protein (GAP) that modifies Der/EngA GTPase function. May play a role in ribosome biogenesis. In Pectobacterium carotovorum subsp. carotovorum (strain PC1), this protein is Der GTPase-activating protein YihI.